Reading from the N-terminus, the 75-residue chain is ATP synthase subunit c (75 aa).

2 consecutive transmembrane segments (helical) span residues 8-28 (FIAI…IANI) and 52-72 (IGAA…MLLI).

This sequence belongs to the ATPase C chain family. In terms of assembly, F-type ATPases have 2 components, F(1) - the catalytic core - and F(0) - the membrane proton channel. F(1) has five subunits: alpha(3), beta(3), gamma(1), delta(1), epsilon(1). F(0) has three main subunits: a(1), b(2) and c(10-14). The alpha and beta chains form an alternating ring which encloses part of the gamma chain. F(1) is attached to F(0) by a central stalk formed by the gamma and epsilon chains, while a peripheral stalk is formed by the delta and b chains.

It is found in the cell membrane. F(1)F(0) ATP synthase produces ATP from ADP in the presence of a proton or sodium gradient. F-type ATPases consist of two structural domains, F(1) containing the extramembraneous catalytic core and F(0) containing the membrane proton channel, linked together by a central stalk and a peripheral stalk. During catalysis, ATP synthesis in the catalytic domain of F(1) is coupled via a rotary mechanism of the central stalk subunits to proton translocation. Its function is as follows. Key component of the F(0) channel; it plays a direct role in translocation across the membrane. A homomeric c-ring of between 10-14 subunits forms the central stalk rotor element with the F(1) delta and epsilon subunits. The polypeptide is ATP synthase subunit c (Wolbachia pipientis wMel).